Consider the following 240-residue polypeptide: C-type lectin domain family 4 member A (240 aa).

Residues 1-48 are Cytoplasmic-facing; the sequence is MASEITYAEVRIKNESNSSVTYSGSPAAPREKPTRHLSKPGSLLVPFT. The ITIM motif signature appears at 5–10; it reads ITYAEV. The interval 18–38 is disordered; it reads SSVTYSGSPAAPREKPTRHLS. Residues 49–69 form a helical; Signal-anchor for type II membrane protein membrane-spanning segment; the sequence is SLMVLLLLLAITFLVAFIIYF. At 70 to 240 the chain is on the extracellular side; that stretch reads QKYSQFLEEK…SVCQMKKIQL (171 aa). 3 disulfides stabilise this stretch: cysteine 107/cysteine 118, cysteine 140/cysteine 233, and cysteine 208/cysteine 225. A C-type lectin domain is found at 129–235; that stretch reads SKASWSESEK…SGKQQSVCQM (107 aa). Residues valine 149 and glutamate 155 each coordinate Ca(2+). N-linked (GlcNAc...) asparagine glycosylation is present at asparagine 190. Positions 200, 202, and 206 each coordinate Ca(2+). Residues 200 to 202 and glutamate 206 contribute to the alpha-D-mannopyranose site; that span reads EPS. 211 to 213 serves as a coordination point for N-acetyl-D-glucosamine; sequence INH. Ca(2+)-binding residues include asparagine 221 and aspartate 222.

May interact with PTPN6 via its ITIM site. As to expression, expressed by myeloid cells (dendritic cells, macrophages, and neutrophils) and B-cells.

The protein localises to the cell membrane. C-type lectin receptor that binds carbohydrates mannose and fucose but also weakly interacts with N-acetylglucosamine (GlcNAc) in a Ca(2+)-dependent manner. Involved in regulating immune reactivity. Once triggered by antigen, it is internalized by clathrin-dependent endocytosis and delivers its antigenic cargo into the antigen presentation pathway resulting in cross-priming of CD8(+) T cells. This cross-presentation and cross-priming are enhanced by TLR7 and TLR8 agonists with increased expansion of the CD8(+) T cells, high production of IFNG and TNF with reduced levels of IL4, IL5 and IL13. In plasmacytoid dendritic cells, inhibits TLR9-mediated IFNA and TNF production. May be involved via its ITIM motif (immunoreceptor tyrosine-based inhibitory motifs) in the inhibition of B-cell-receptor-mediated calcium mobilization and protein tyrosine phosphorylation. The polypeptide is C-type lectin domain family 4 member A (Clec4a) (Rattus norvegicus (Rat)).